The primary structure comprises 377 residues: UPF0425 pyridoxal phosphate-dependent protein MTH_1914 (377 aa).

Lys207 bears the N6-(pyridoxal phosphate)lysine mark.

This sequence belongs to the UPF0425 family. Pyridoxal 5'-phosphate is required as a cofactor.

The polypeptide is UPF0425 pyridoxal phosphate-dependent protein MTH_1914 (Methanothermobacter thermautotrophicus (strain ATCC 29096 / DSM 1053 / JCM 10044 / NBRC 100330 / Delta H) (Methanobacterium thermoautotrophicum)).